A 162-amino-acid chain; its full sequence is ATP synthase subunit b 1 (162 aa).

Residues 1 to 21 traverse the membrane as a helical segment; sequence MLLTAEFWVAVAFVAFLVIVW.

This sequence belongs to the ATPase B chain family. In terms of assembly, F-type ATPases have 2 components, F(1) - the catalytic core - and F(0) - the membrane proton channel. F(1) has five subunits: alpha(3), beta(3), gamma(1), delta(1), epsilon(1). F(0) has three main subunits: a(1), b(2) and c(10-14). The alpha and beta chains form an alternating ring which encloses part of the gamma chain. F(1) is attached to F(0) by a central stalk formed by the gamma and epsilon chains, while a peripheral stalk is formed by the delta and b chains.

Its subcellular location is the cell inner membrane. Functionally, f(1)F(0) ATP synthase produces ATP from ADP in the presence of a proton or sodium gradient. F-type ATPases consist of two structural domains, F(1) containing the extramembraneous catalytic core and F(0) containing the membrane proton channel, linked together by a central stalk and a peripheral stalk. During catalysis, ATP synthesis in the catalytic domain of F(1) is coupled via a rotary mechanism of the central stalk subunits to proton translocation. Its function is as follows. Component of the F(0) channel, it forms part of the peripheral stalk, linking F(1) to F(0). This Methylorubrum populi (strain ATCC BAA-705 / NCIMB 13946 / BJ001) (Methylobacterium populi) protein is ATP synthase subunit b 1.